A 669-amino-acid polypeptide reads, in one-letter code: DNA mismatch repair protein MutL (669 aa).

Residues S343–E408 are disordered. The span at A344–Q356 shows a compositional bias: basic and acidic residues. Positions P357–V372 are enriched in polar residues. The span at T390–E408 shows a compositional bias: basic and acidic residues.

This sequence belongs to the DNA mismatch repair MutL/HexB family.

Its function is as follows. This protein is involved in the repair of mismatches in DNA. It is required for dam-dependent methyl-directed DNA mismatch repair. May act as a 'molecular matchmaker', a protein that promotes the formation of a stable complex between two or more DNA-binding proteins in an ATP-dependent manner without itself being part of a final effector complex. This is DNA mismatch repair protein MutL from Vibrio parahaemolyticus serotype O3:K6 (strain RIMD 2210633).